Reading from the N-terminus, the 253-residue chain is 3-dehydroquinate dehydratase (253 aa).

Residues 46–48 (EWR) and arginine 82 each bind 3-dehydroquinate. The active-site Proton donor/acceptor is the histidine 143. Catalysis depends on lysine 170, which acts as the Schiff-base intermediate with substrate. 3-dehydroquinate-binding residues include arginine 213, serine 232, and glutamine 236.

The protein belongs to the type-I 3-dehydroquinase family. As to quaternary structure, homodimer.

The enzyme catalyses 3-dehydroquinate = 3-dehydroshikimate + H2O. It participates in metabolic intermediate biosynthesis; chorismate biosynthesis; chorismate from D-erythrose 4-phosphate and phosphoenolpyruvate: step 3/7. Functionally, involved in the third step of the chorismate pathway, which leads to the biosynthesis of aromatic amino acids. Catalyzes the cis-dehydration of 3-dehydroquinate (DHQ) and introduces the first double bond of the aromatic ring to yield 3-dehydroshikimate. This chain is 3-dehydroquinate dehydratase, found in Bacillus velezensis (strain DSM 23117 / BGSC 10A6 / LMG 26770 / FZB42) (Bacillus amyloliquefaciens subsp. plantarum).